We begin with the raw amino-acid sequence, 208 residues long: Small ribosomal subunit protein uS2 (208 aa).

Residues 189-208 (KPDQDLPVPPEEFETKLVQS) form a disordered region.

It belongs to the universal ribosomal protein uS2 family.

In Pyrobaculum aerophilum (strain ATCC 51768 / DSM 7523 / JCM 9630 / CIP 104966 / NBRC 100827 / IM2), this protein is Small ribosomal subunit protein uS2 (rps2).